A 963-amino-acid chain; its full sequence is VPS35 endosomal protein-sorting factor-like (963 aa).

Disordered regions lie at residues I38 to S71 and A85 to V111. Over residues G52 to S63 the composition is skewed to low complexity.

Belongs to the VPS35L family. In terms of assembly, component of the heterotrimeric retriever complex.

It localises to the endosome. In terms of biological role, acts as a component of the retriever complex. The retriever complex is a heterotrimeric complex related to retromer cargo-selective complex (CSC) and essential for retromer-independent retrieval and recycling of numerous cargos such as integrins. The recruitment of the retriever complex to the endosomal membrane involves CCC and WASH complexes. In the endosomes, drives the retrieval and recycling of NxxY-motif-containing cargo proteins by coupling to SNX17, a cargo essential for the homeostatic maintenance of numerous cell surface proteins associated with processes that include cell migration, cell adhesion, nutrient supply and cell signaling. May be involved in copper-dependent atp7a trafficking between the trans-Golgi network and vesicles in the cell periphery. The sequence is that of VPS35 endosomal protein-sorting factor-like (vps35l) from Danio rerio (Zebrafish).